We begin with the raw amino-acid sequence, 60 residues long: Large ribosomal subunit protein bL32 (60 aa).

The protein belongs to the bacterial ribosomal protein bL32 family.

The chain is Large ribosomal subunit protein bL32 from Streptococcus pneumoniae serotype 4 (strain ATCC BAA-334 / TIGR4).